The following is a 365-amino-acid chain: MFVVLFVLTLILLYAVFVVWAERKVAAFIQDRLGPMEVGPYGMLQTIADLIKLLQKEDIIATGANRFLFRLAPVLIFTAIFAGFATLPFAPDLIGSKADVGVFFMITIVSLDVVGIFLAGWASNNKFSILGAFRAIAQVISYEIPLTLSILAVVLICQTLDLQEISFQQGIYFVNKQELNTSLFGITSLGIDVNKIGGFVSWNAFKYPFLLLAYVVFFIASLAECNRAPFDIPEGESELVSGFHTEYTGFRFAILFLAEYAMMLLVAFLGVVLFFGSWNTALPNIGSLHFADWTSGTPGTIAGYAWGLFWLISKGITVVFLQLVMRWTYPRLRVDQLMNLCWKILLPLSLFLVIVSGVWVVWMKI.

8 helical membrane-spanning segments follow: residues 1 to 21 (MFVV…VVWA), 71 to 91 (LAPV…PFAP), 100 to 120 (VGVF…FLAG), 136 to 156 (IAQV…VVLI), 199 to 219 (FVSW…VFFI), 254 to 274 (ILFL…VVLF), 301 to 321 (IAGY…VVFL), and 342 to 362 (WKIL…WVVW).

This sequence belongs to the complex I subunit 1 family. In terms of assembly, NDH-1 is composed of 14 different subunits. Subunits NuoA, H, J, K, L, M, N constitute the membrane sector of the complex.

It is found in the cell inner membrane. The catalysed reaction is a quinone + NADH + 5 H(+)(in) = a quinol + NAD(+) + 4 H(+)(out). NDH-1 shuttles electrons from NADH, via FMN and iron-sulfur (Fe-S) centers, to quinones in the respiratory chain. The immediate electron acceptor for the enzyme in this species is believed to be ubiquinone. Couples the redox reaction to proton translocation (for every two electrons transferred, four hydrogen ions are translocated across the cytoplasmic membrane), and thus conserves the redox energy in a proton gradient. This subunit may bind ubiquinone. This Cytophaga hutchinsonii (strain ATCC 33406 / DSM 1761 / CIP 103989 / NBRC 15051 / NCIMB 9469 / D465) protein is NADH-quinone oxidoreductase subunit H 2.